A 378-amino-acid chain; its full sequence is Erythronate-4-phosphate dehydrogenase (378 aa).

Substrate contacts are provided by serine 45 and threonine 66. Aspartate 146 provides a ligand contact to NAD(+). Arginine 207 is an active-site residue. Residue aspartate 231 coordinates NAD(+). Glutamate 236 is an active-site residue. The active-site Proton donor is the histidine 253. Position 256 (glycine 256) interacts with NAD(+).

Belongs to the D-isomer specific 2-hydroxyacid dehydrogenase family. PdxB subfamily. Homodimer.

It localises to the cytoplasm. The catalysed reaction is 4-phospho-D-erythronate + NAD(+) = (R)-3-hydroxy-2-oxo-4-phosphooxybutanoate + NADH + H(+). The protein operates within cofactor biosynthesis; pyridoxine 5'-phosphate biosynthesis; pyridoxine 5'-phosphate from D-erythrose 4-phosphate: step 2/5. Catalyzes the oxidation of erythronate-4-phosphate to 3-hydroxy-2-oxo-4-phosphonooxybutanoate. The sequence is that of Erythronate-4-phosphate dehydrogenase from Wigglesworthia glossinidia brevipalpis.